The chain runs to 101 residues: Small ribosomal subunit protein uS14 (101 aa).

This sequence belongs to the universal ribosomal protein uS14 family. As to quaternary structure, part of the 30S ribosomal subunit. Contacts proteins S3 and S10.

In terms of biological role, binds 16S rRNA, required for the assembly of 30S particles and may also be responsible for determining the conformation of the 16S rRNA at the A site. This is Small ribosomal subunit protein uS14 from Alkalilimnicola ehrlichii (strain ATCC BAA-1101 / DSM 17681 / MLHE-1).